Reading from the N-terminus, the 119-residue chain is Ribonuclease P protein component (119 aa).

It belongs to the RnpA family. Consists of a catalytic RNA component (M1 or rnpB) and a protein subunit.

The enzyme catalyses Endonucleolytic cleavage of RNA, removing 5'-extranucleotides from tRNA precursor.. In terms of biological role, RNaseP catalyzes the removal of the 5'-leader sequence from pre-tRNA to produce the mature 5'-terminus. It can also cleave other RNA substrates such as 4.5S RNA. The protein component plays an auxiliary but essential role in vivo by binding to the 5'-leader sequence and broadening the substrate specificity of the ribozyme. This is Ribonuclease P protein component from Photorhabdus laumondii subsp. laumondii (strain DSM 15139 / CIP 105565 / TT01) (Photorhabdus luminescens subsp. laumondii).